Consider the following 1377-residue polypeptide: DNA-directed RNA polymerase subunit beta (1377 aa).

The protein belongs to the RNA polymerase beta chain family. In terms of assembly, the RNAP catalytic core consists of 2 alpha, 1 beta, 1 beta' and 1 omega subunit. When a sigma factor is associated with the core the holoenzyme is formed, which can initiate transcription.

The catalysed reaction is RNA(n) + a ribonucleoside 5'-triphosphate = RNA(n+1) + diphosphate. Functionally, DNA-dependent RNA polymerase catalyzes the transcription of DNA into RNA using the four ribonucleoside triphosphates as substrates. The chain is DNA-directed RNA polymerase subunit beta from Campylobacter lari (strain RM2100 / D67 / ATCC BAA-1060).